The sequence spans 516 residues: Threonine synthase 2, chloroplastic (516 aa).

A chloroplast-targeting transit peptide spans 1–33 (MASFSLPHSATYFPSHSETSLKPHSAASFTVRC). Polar residues predominate over residues 1–37 (MASFSLPHSATYFPSHSETSLKPHSAASFTVRCTSAS). A disordered region spans residues 1-55 (MASFSLPHSATYFPSHSETSLKPHSAASFTVRCTSASPAVPPQTPQKPRRSPDEN). S-adenosyl-L-methionine is bound by residues 133 to 135 (PYG), 156 to 158 (SAF), asparagine 163, leucine 164, lysine 172, and asparagine 178. N6-(pyridoxal phosphate)lysine is present on lysine 194. Pyridoxal 5'-phosphate-binding positions include 326-330 (GNLGN) and threonine 464.

Belongs to the threonine synthase family. In terms of assembly, homodimer. Pyridoxal 5'-phosphate is required as a cofactor.

The protein resides in the plastid. It is found in the chloroplast. It carries out the reaction O-phospho-L-homoserine + H2O = L-threonine + phosphate. It functions in the pathway amino-acid biosynthesis; L-threonine biosynthesis; L-threonine from L-aspartate: step 5/5. Its activity is regulated as follows. Allosterically activated by S-adenosyl-methionine (SAM). Functionally, catalyzes the gamma-elimination of phosphate from L-phosphohomoserine and the beta-addition of water to produce L-threonine. The polypeptide is Threonine synthase 2, chloroplastic (TS2) (Arabidopsis thaliana (Mouse-ear cress)).